Consider the following 932-residue polypeptide: DNA mismatch repair protein MutS (932 aa).

Residue 615 to 622 participates in ATP binding; that stretch reads GPNMAGKS.

Belongs to the DNA mismatch repair MutS family.

In terms of biological role, this protein is involved in the repair of mismatches in DNA. It is possible that it carries out the mismatch recognition step. This protein has a weak ATPase activity. This chain is DNA mismatch repair protein MutS, found in Clostridium botulinum (strain Langeland / NCTC 10281 / Type F).